The sequence spans 62 residues: Alkaline proteinase (62 aa).

Positions 1 to 62 (GSTSYIYDTS…FAPGTSVLSS (62 aa)) constitute a Peptidase S8 domain. Residue Asp-21 is the Charge relay system of the active site.

Its subcellular location is the secreted. With respect to regulation, inhibited by phenylmethanesulfonyl fluoride (PMSF) and chymostatin (CST), but not by Bowman-Birk type trypsin-chymotrypsin inhibitor (BBI). Its function is as follows. Serine protease. May be involved in the invasion of grains and hydrolysis of grain proteins. This chain is Alkaline proteinase, found in Fusarium culmorum.